The chain runs to 312 residues: tRNA dimethylallyltransferase (312 aa).

Residue 10-17 (GPTASGKS) participates in ATP binding. 12-17 (TASGKS) is a binding site for substrate. Positions 35–38 (DSKQ) are interaction with substrate tRNA.

It belongs to the IPP transferase family. In terms of assembly, monomer. Mg(2+) serves as cofactor.

It catalyses the reaction adenosine(37) in tRNA + dimethylallyl diphosphate = N(6)-dimethylallyladenosine(37) in tRNA + diphosphate. In terms of biological role, catalyzes the transfer of a dimethylallyl group onto the adenine at position 37 in tRNAs that read codons beginning with uridine, leading to the formation of N6-(dimethylallyl)adenosine (i(6)A). The chain is tRNA dimethylallyltransferase from Anaplasma phagocytophilum (strain HZ).